A 217-amino-acid chain; its full sequence is Probable ribonuclease P protein subunit 1 (217 aa).

The protein belongs to the eukaryotic/archaeal RNase P protein component 1 family.

Its subcellular location is the nucleus. The protein localises to the nucleolus. The catalysed reaction is Endonucleolytic cleavage of RNA, removing 5'-extranucleotides from tRNA precursor.. Its function is as follows. Part of ribonuclease P, a protein complex that generates mature tRNA molecules by cleaving their 5'-ends. The chain is Probable ribonuclease P protein subunit 1 from Schizosaccharomyces pombe (strain 972 / ATCC 24843) (Fission yeast).